A 193-amino-acid polypeptide reads, in one-letter code: Cysteine and glycine-rich protein 2 (193 aa).

Residues 10–61 enclose the LIM zinc-binding 1 domain; it reads CGACGRTVYHAEEVQCDGRSFHRCCFLCMVCRKNLDSTTVAIHDEEIYCKSC. A Nuclear localization signal motif is present at residues 64 to 69; it reads KKYGPK. A Glycyl lysine isopeptide (Lys-Gly) (interchain with G-Cter in SUMO2) cross-link involves residue K91. K112 and K131 each carry N6-acetyllysine. Residues 119–170 form the LIM zinc-binding 2 domain; that stretch reads CSRCGDSVYAAEKIIGAGKPWHKNCFRCAKCGKSLESTTLTEKEGEIYCKGC. At K137 the chain carries N6-acetyllysine; alternate. Residue K137 is modified to N6-succinyllysine; alternate. At K161 the chain carries N6-acetyllysine.

In terms of assembly, interacts with KAT14. The LIM domain 1 is necessary and sufficient for this interaction. Interacts with GLRX3.

Its subcellular location is the nucleus. In terms of biological role, drastically down-regulated in response to PDGF-BB or cell injury, that promote smooth muscle cell proliferation and dedifferentiation. Seems to play a role in the development of the embryonic vascular system. This Bos taurus (Bovine) protein is Cysteine and glycine-rich protein 2 (CSRP2).